We begin with the raw amino-acid sequence, 116 residues long: Ribosome-binding factor A (116 aa).

It belongs to the RbfA family. Monomer. Binds 30S ribosomal subunits, but not 50S ribosomal subunits or 70S ribosomes.

Its subcellular location is the cytoplasm. Its function is as follows. One of several proteins that assist in the late maturation steps of the functional core of the 30S ribosomal subunit. Associates with free 30S ribosomal subunits (but not with 30S subunits that are part of 70S ribosomes or polysomes). Required for efficient processing of 16S rRNA. May interact with the 5'-terminal helix region of 16S rRNA. In Halalkalibacterium halodurans (strain ATCC BAA-125 / DSM 18197 / FERM 7344 / JCM 9153 / C-125) (Bacillus halodurans), this protein is Ribosome-binding factor A.